The following is an 860-amino-acid chain: Protein argonaute-3 (860 aa).

The 120-residue stretch at 230–349 (PVIQFMCEVL…LPLEVCNIVA (120 aa)) folds into the PAZ domain. One can recognise a Piwi domain in the interval 518–819 (LIIVILPGKT…VAFRARYHLV (302 aa)). Positions 530–567 (YAEVKRAGDTLLGMATQCVQVKNVIKTSPQTLSNLCLK) are interaction with guide RNA. Asp598, Glu638, and Asp670 together coordinate a divalent metal cation. Positions 758–805 (QGTSRPSHYHVLWDDNCFTADELQLLTYQLCHTYVRCTRSVSIPAPAY) are interaction with guide RNA. His808 contributes to the a divalent metal cation binding site.

The protein belongs to the argonaute family. Ago subfamily.

It localises to the cytoplasm. Its subcellular location is the P-body. It catalyses the reaction Endonucleolytic cleavage to 5'-phosphomonoester.. In terms of biological role, required for RNA-mediated gene silencing (RNAi). Binds to short RNAs such as microRNAs (miRNAs) and represses the translation of mRNAs which are complementary to them. Possesses RNA slicer activity but only on select RNAs bearing 5'- and 3'-flanking sequences to the region of guide-target complementarity. The polypeptide is Protein argonaute-3 (AGO3) (Gallus gallus (Chicken)).